The primary structure comprises 470 residues: Poly(A) polymerase catalytic subunit (470 aa).

Catalysis depends on residues aspartate 192 and aspartate 194.

This sequence belongs to the poxviridae poly(A) polymerase catalytic subunit family. In terms of assembly, heterodimer of a large (catalytic) subunit and a small (regulatory) subunit.

The enzyme catalyses RNA(n) + ATP = RNA(n)-3'-adenine ribonucleotide + diphosphate. Functionally, polymerase that creates the 3'-poly(A) tail of mRNA's. The polypeptide is Poly(A) polymerase catalytic subunit (PAPL) (Deerpox virus (strain Mule deer/United States/W-848-83/1983) (DPV)).